A 94-amino-acid chain; its full sequence is UPF0235 protein Dred_0717 (94 aa).

The protein belongs to the UPF0235 family.

The polypeptide is UPF0235 protein Dred_0717 (Desulforamulus reducens (strain ATCC BAA-1160 / DSM 100696 / MI-1) (Desulfotomaculum reducens)).